A 137-amino-acid chain; its full sequence is Large ribosomal subunit protein uL16 (137 aa).

It belongs to the universal ribosomal protein uL16 family. Part of the 50S ribosomal subunit.

Binds 23S rRNA and is also seen to make contacts with the A and possibly P site tRNAs. This chain is Large ribosomal subunit protein uL16, found in Lactococcus lactis subsp. lactis (strain IL1403) (Streptococcus lactis).